A 36-amino-acid chain; its full sequence is Beta-amanitin proprotein (36 aa).

Positions 1–10 are excised as a propeptide; sequence MSDINATRLP. A cross-link (cyclopeptide (Ile-Pro)) is located at residues 11 to 18; sequence IWGIGCDP. Positions 12 to 16 form a cross-link, 2'-cysteinyl-6'-hydroxytryptophan sulfoxide (Trp-Cys); the sequence is WGIGC. Positions 19–36 are excised as a propeptide; sequence CIGDDVTALLTRGEASLC.

Belongs to the MSDIN fungal toxin family. Post-translationally, processed by the macrocyclase-peptidase enzyme POPB to yield a toxic cyclic decapeptide. POPB first removes 10 residues from the N-terminus. Conformational trapping of the remaining peptide forces the enzyme to release this intermediate rather than proceed to macrocyclization. The enzyme rebinds the remaining peptide in a different conformation and catalyzes macrocyclization of the N-terminal 8 residues.

Functionally, toxin belonging to the bicyclic octapeptides amatoxins that acts by binding non-competitively to RNA polymerase II and greatly slowing the elongation of transcripts from target promoters. This chain is Beta-amanitin proprotein, found in Amanita phalloides (Death cap).